The following is an 82-amino-acid chain: uncharacterized protein (82 aa).

This is an uncharacterized protein from Orgyia pseudotsugata (Douglas-fir tussock moth).